The primary structure comprises 358 residues: Magnesium-protoporphyrin IX monomethyl ester [oxidative] cyclase 2 (358 aa).

The protein belongs to the AcsF family. Fe cation is required as a cofactor.

The enzyme catalyses Mg-protoporphyrin IX 13-monomethyl ester + 3 NADPH + 3 O2 + 2 H(+) = 3,8-divinyl protochlorophyllide a + 3 NADP(+) + 5 H2O. It functions in the pathway porphyrin-containing compound metabolism; chlorophyll biosynthesis (light-independent). Catalyzes the formation of the isocyclic ring in chlorophyll biosynthesis. Mediates the cyclase reaction, which results in the formation of divinylprotochlorophyllide (Pchlide) characteristic of all chlorophylls from magnesium-protoporphyrin IX 13-monomethyl ester (MgPMME). This is Magnesium-protoporphyrin IX monomethyl ester [oxidative] cyclase 2 from Nostoc sp. (strain PCC 7120 / SAG 25.82 / UTEX 2576).